The sequence spans 86 residues: MSKQPVSNVRAIQANINIPMGAFRPGAGQPPRRKECTPEIEEGAPPTSDEEKKPIPGAKKLPGPAVNLSEIQNIKSELKYVPKAEQ.

Positions 20 to 64 (MGAFRPGAGQPPRRKECTPEIEEGAPPTSDEEKKPIPGAKKLPGP) are disordered.

The protein belongs to the SMPX family.

Its function is as follows. Plays a role in the regulatory network through which muscle cells coordinate their structural and functional states during growth, adaptation, and repair. This chain is Small muscular protein (SMPX), found in Bos taurus (Bovine).